We begin with the raw amino-acid sequence, 252 residues long: Centriole, cilia and spindle-associated protein (252 aa).

At methionine 1 the chain carries N-acetylmethionine. The ST]-E-Y-X(3)-Y motif 1; required for efficient microtubule binding and stabilization signature appears at 9–15 (SEYMKRY). The interval 49 to 163 (WDAWGPDSPS…RSTSKIKENK (115 aa)) is disordered. Residues 54–64 (PDSPSDSSASP) are compositionally biased toward low complexity. A Phosphoserine modification is found at serine 65. Residues 108 to 125 (PKKDTEEKPEEHKTKETD) show a composition bias toward basic and acidic residues. Serine 191 is modified (phosphoserine). The ST]-E-Y-X(3)-Y motif 2; required for efficient microtubule binding and stabilization motif lies at 242–248 (TEYMRCY).

It belongs to the CCSAP family. As to quaternary structure, associates with microtubules; the association occurs on polyglutamylated tubulin.

It localises to the cytoplasm. The protein localises to the cytoskeleton. Its subcellular location is the microtubule organizing center. The protein resides in the centrosome. It is found in the centriole. It localises to the spindle. The protein localises to the cilium basal body. Its subcellular location is the cilium axoneme. The protein resides in the cell projection. It is found in the axon. It localises to the cilium. In terms of biological role, plays a role in microtubule (MT) stabilization and this stabilization involves the maintenance of NUMA1 at the spindle poles. Colocalizes with polyglutamylated MTs to promote MT stabilization and regulate bipolar spindle formation in mitosis. Binding of CCSAP to centrosomes and the spindle around centrosomes during mitosis inhibits MT depolymerization, thereby stabilizing the mitotic spindle. May play a role in embryonic development. May be required for proper cilia beating. In Mus musculus (Mouse), this protein is Centriole, cilia and spindle-associated protein (Ccsap).